Here is a 150-residue protein sequence, read N- to C-terminus: Probable cyclic pyranopterin monophosphate synthase (150 aa).

Residues 68-70 and 104-105 each bind substrate; these read YCH and ME. The active site involves aspartate 119.

Belongs to the MoaC family. As to quaternary structure, homohexamer; trimer of dimers.

It catalyses the reaction (8S)-3',8-cyclo-7,8-dihydroguanosine 5'-triphosphate = cyclic pyranopterin phosphate + diphosphate. It participates in cofactor biosynthesis; molybdopterin biosynthesis. Its function is as follows. Catalyzes the conversion of (8S)-3',8-cyclo-7,8-dihydroguanosine 5'-triphosphate to cyclic pyranopterin monophosphate (cPMP). The protein is Probable cyclic pyranopterin monophosphate synthase of Thermoplasma volcanium (strain ATCC 51530 / DSM 4299 / JCM 9571 / NBRC 15438 / GSS1).